A 311-amino-acid chain; its full sequence is Cell division protein ZipA (311 aa).

Residues 1-5 (MQELR) are Periplasmic-facing. Residues 6–26 (FVLIVVGALAIMALLFHGLWT) traverse the membrane as a helical segment. Topologically, residues 27–311 (SKKEGKAKFG…QIVEFKAANA (285 aa)) are cytoplasmic. Residues 32–54 (KAKFGDKPLSKLDLGESEPKESE) are compositionally biased toward basic and acidic residues. Positions 32–60 (KAKFGDKPLSKLDLGESEPKESEMYVAPE) are disordered.

This sequence belongs to the ZipA family. Interacts with FtsZ via their C-terminal domains.

Its subcellular location is the cell inner membrane. Its function is as follows. Essential cell division protein that stabilizes the FtsZ protofilaments by cross-linking them and that serves as a cytoplasmic membrane anchor for the Z ring. Also required for the recruitment to the septal ring of downstream cell division proteins. In Vibrio vulnificus (strain CMCP6), this protein is Cell division protein ZipA.